We begin with the raw amino-acid sequence, 113 residues long: N(2)-fixation sustaining protein CowN (113 aa).

It belongs to the CowN family.

Its function is as follows. Is required to sustain N(2)-dependent growth in the presence of low levels of carbon monoxide (CO). Probably acts by protecting the N(2) fixation ability of the nitrogenase complex, which is inactivated in the presence of CO. The sequence is that of N(2)-fixation sustaining protein CowN from Wolinella succinogenes (strain ATCC 29543 / DSM 1740 / CCUG 13145 / JCM 31913 / LMG 7466 / NCTC 11488 / FDC 602W) (Vibrio succinogenes).